Reading from the N-terminus, the 398-residue chain is Acetate kinase (398 aa).

Residue Asn7 participates in Mg(2+) binding. Lys14 contributes to the ATP binding site. Position 92 (Arg92) interacts with substrate. Asp149 acts as the Proton donor/acceptor in catalysis. ATP-binding positions include 209–213, 284–286, and 332–336; these read HLGNG, DFR, and GVGEN. Glu385 is a binding site for Mg(2+).

Belongs to the acetokinase family. Homodimer. Requires Mg(2+) as cofactor. Mn(2+) is required as a cofactor.

Its subcellular location is the cytoplasm. It catalyses the reaction acetate + ATP = acetyl phosphate + ADP. Its pathway is metabolic intermediate biosynthesis; acetyl-CoA biosynthesis; acetyl-CoA from acetate: step 1/2. In terms of biological role, catalyzes the formation of acetyl phosphate from acetate and ATP. Can also catalyze the reverse reaction. In Clostridioides difficile (strain 630) (Peptoclostridium difficile), this protein is Acetate kinase.